A 438-amino-acid polypeptide reads, in one-letter code: MEGADLAVKLLSTWLTLVGGLILLPSAFGLSLGISEIYMKILVKTLEWATLRIQKGAPKESALKNSASVGIIQRDESPMEKGLSGLRGRDFELSDVFYFSKKGLEAIVEDEVTQRFSSEELVSWNLLTRTNVNFQYISPRLTMVWVLGVLVRYCFLLPLRVTLAFIGISLLIIGTTLVGQLPDSSLKNWLSELVHLTCCRICVRSLSGTIHYHNKQYRPQKGGICVANHTSPIDVLILATDGCYAMVGQVHGGLMGIIQRAMVKACPHVWFERSEIKDRHLVTKRLKEHIADKKKLPILIFPEGTCINNTSVMMFKKGSFEIGGTIYPVAIKYNPQFGDAFWNSSKYNLVSYLLRIMTSWAIVCDVWYMPPMTREEGEDAVQFANRVKSAIAVQGGLTELPWDGGLKRAKVKDTFKEEQQKNYSKMIVGNGSPNLARD.

Residues 14-34 form a helical membrane-spanning segment; sequence WLTLVGGLILLPSAFGLSLGI. Phosphoserine is present on residues Ser68 and Ser77. A run of 2 helical transmembrane segments spans residues 137 to 157 and 161 to 181; these read ISPR…CFLL and VTLA…VGQL. An HXXXXD motif motif is present at residues 229–234; the sequence is HTSPID.

This sequence belongs to the 1-acyl-sn-glycerol-3-phosphate acyltransferase family. In terms of tissue distribution, most abundant in epididymal fat, followed by small intestine, brown adipose tissue, kidney, heart and colon.

It localises to the endoplasmic reticulum membrane. The catalysed reaction is sn-glycerol 3-phosphate + an acyl-CoA = a 1-acyl-sn-glycero-3-phosphate + CoA. The enzyme catalyses a 1-acyl-sn-glycero-3-phosphate + an acyl-CoA = a 1,2-diacyl-sn-glycero-3-phosphate + CoA. It catalyses the reaction dodecanoyl-CoA + sn-glycerol 3-phosphate = 1-dodecanoyl-sn-glycerol 3-phosphate + CoA. It carries out the reaction sn-glycerol 3-phosphate + hexadecanoyl-CoA = 1-hexadecanoyl-sn-glycero-3-phosphate + CoA. The catalysed reaction is sn-glycerol 3-phosphate + (9Z)-octadecenoyl-CoA = 1-(9Z-octadecenoyl)-sn-glycero-3-phosphate + CoA. The enzyme catalyses (9Z,12Z)-octadecadienoyl-CoA + sn-glycerol 3-phosphate = 1-(9Z,12Z)-octadecadienoyl-sn-glycero-3-phosphate + CoA. It catalyses the reaction 1-tetradecanoyl-sn-glycerol 3-phosphate + (9Z)-octadecenoyl-CoA = 1-tetradecanoyl-2-(9Z)-octadecenoyl-sn-glycero-3-phosphate + CoA. It carries out the reaction 1-hexadecanoyl-sn-glycero-3-phosphate + (9Z)-octadecenoyl-CoA = 1-hexadecanoyl-2-(9Z-octadecenoyl)-sn-glycero-3-phosphate + CoA. The catalysed reaction is 1-(9Z-octadecenoyl)-sn-glycero-3-phosphate + (9Z)-octadecenoyl-CoA = 1,2-di-(9Z-octadecenoyl)-sn-glycero-3-phosphate + CoA. The enzyme catalyses 1-(6Z,9Z,12Z-octadecatrienoyl)-sn-glycero-3-phosphate + (9Z)-octadecenoyl-CoA = (6Z,9Z,12Z)-octadecatrienoyl-2-(9Z)-octadecenoyl-sn-glycero-3-phosphate + CoA. It catalyses the reaction 1-(9Z,12Z,15Z)-octadecatrienoyl-sn-glycero-3-phosphate + (9Z)-octadecenoyl-CoA = 1-(9Z,12Z,15Z)-octadecatrienoyl-2-(9Z)-octadecenoyl-sn-glycero-3-phosphate + CoA. It carries out the reaction 1-(9Z-octadecenoyl)-sn-glycero-3-phosphate + tetradecanoyl-CoA = 1-(9Z)-octadecenoyl-2-tetradecanoyl-sn-glycero-3-phosphate + CoA. The catalysed reaction is 1-(9Z-octadecenoyl)-sn-glycero-3-phosphate + hexadecanoyl-CoA = 1-(9Z)-octadecenoyl-2-hexadecanoyl-sn-glycero-3-phosphate + CoA. The enzyme catalyses 1-(9Z-octadecenoyl)-sn-glycero-3-phosphate + octadecanoyl-CoA = 1-(9Z-octadecenoyl)-2-octadecanoyl-sn-glycero-3-phosphate + CoA. It catalyses the reaction 1-(9Z-octadecenoyl)-sn-glycero-3-phosphate + (9Z,12Z)-octadecadienoyl-CoA = 1-(9Z)-octadecenoyl-2-(9Z,12Z)-octadecadienoyl-sn-glycero-3-phosphate + CoA. It carries out the reaction 1-(5Z,8Z,11Z,14Z-eicosatetraenoyl)-sn-glycero-3-phosphate + (9Z)-octadecenoyl-CoA = 1-(5Z,8Z,11Z,14Z)-eicosatetraenoyl-2-(9Z)-octadecenoyl-sn-glycero-3-phosphate + CoA. The protein operates within glycerolipid metabolism; triacylglycerol biosynthesis. It functions in the pathway phospholipid metabolism; CDP-diacylglycerol biosynthesis; CDP-diacylglycerol from sn-glycerol 3-phosphate: step 1/3. Its function is as follows. Converts glycerol-3-phosphate to 1-acyl-sn-glycerol-3-phosphate (lysophosphatidic acid or LPA) by incorporating an acyl moiety at the sn-1 position of the glycerol backbone. Also converts LPA into 1,2-diacyl-sn-glycerol-3-phosphate (phosphatidic acid or PA) by incorporating an acyl moiety at the sn-2 position of the glycerol backbone. Protects cells against lipotoxicity. The chain is Glycerol-3-phosphate acyltransferase 3 from Mus musculus (Mouse).